A 244-amino-acid polypeptide reads, in one-letter code: Protein-L-isoaspartate O-methyltransferase (244 aa).

Residues 1 to 39 form a disordered region; sequence MINPFSSFRWRHSSRSPAGIPEVEPQPPDASDPFASQRE. Serine 92 is a catalytic residue.

It belongs to the methyltransferase superfamily. L-isoaspartyl/D-aspartyl protein methyltransferase family.

It is found in the cytoplasm. The enzyme catalyses [protein]-L-isoaspartate + S-adenosyl-L-methionine = [protein]-L-isoaspartate alpha-methyl ester + S-adenosyl-L-homocysteine. Catalyzes the methyl esterification of L-isoaspartyl residues in peptides and proteins that result from spontaneous decomposition of normal L-aspartyl and L-asparaginyl residues. It plays a role in the repair and/or degradation of damaged proteins. The protein is Protein-L-isoaspartate O-methyltransferase of Synechococcus sp. (strain JA-2-3B'a(2-13)) (Cyanobacteria bacterium Yellowstone B-Prime).